We begin with the raw amino-acid sequence, 341 residues long: tRNA N6-adenosine threonylcarbamoyltransferase (341 aa).

2 residues coordinate Fe cation: His115 and His119. Substrate is bound by residues 138-142, Asp171, Gly184, and Asn276; that span reads LVSGG. Asp304 contributes to the Fe cation binding site.

It belongs to the KAE1 / TsaD family. Fe(2+) serves as cofactor.

Its subcellular location is the cytoplasm. The enzyme catalyses L-threonylcarbamoyladenylate + adenosine(37) in tRNA = N(6)-L-threonylcarbamoyladenosine(37) in tRNA + AMP + H(+). In terms of biological role, required for the formation of a threonylcarbamoyl group on adenosine at position 37 (t(6)A37) in tRNAs that read codons beginning with adenine. Is involved in the transfer of the threonylcarbamoyl moiety of threonylcarbamoyl-AMP (TC-AMP) to the N6 group of A37, together with TsaE and TsaB. TsaD likely plays a direct catalytic role in this reaction. The chain is tRNA N6-adenosine threonylcarbamoyltransferase from Stenotrophomonas maltophilia (strain K279a).